Reading from the N-terminus, the 126-residue chain is Protein Wnt-1 (126 aa).

Ser-1 is lipidated: O-palmitoleoyl serine; by PORCN. Residues Cys-92 and Cys-107 are joined by a disulfide bond. N-linked (GlcNAc...) asparagine glycans are attached at residues Asn-93 and Asn-123.

Belongs to the Wnt family. Post-translationally, palmitoleoylation is required for efficient binding to frizzled receptors. Palmitoleoylation is necessary for proper trafficking to cell surface. Depalmitoleoylated by NOTUM, leading to inhibit Wnt signaling pathway.

The protein localises to the secreted. It is found in the extracellular space. It localises to the extracellular matrix. In terms of biological role, ligand for members of the frizzled family of seven transmembrane receptors. Acts in the canonical Wnt signaling pathway by promoting beta-catenin-dependent transcriptional activation. Plays an essential role in the development of the embryonic brain and central nervous system (CNS). Has a role in osteoblast function, bone development and bone homeostasis. In Plestiodon skiltonianus (Western skink), this protein is Protein Wnt-1 (WNT-1).